Consider the following 1995-residue polypeptide: uncharacterized protein (1995 aa).

A run of 7 helical transmembrane segments spans residues 31-51 (NYTE…EFFK), 53-73 (FFSF…PDIA), 106-126 (LVIF…ILPT), 157-177 (FLWL…WLSL), 212-232 (IFLL…PFIS), 254-274 (FLLI…SLLQ), and 307-327 (ILNF…IPYY). Disordered regions lie at residues 1418 to 1441 (SLKK…HQFS) and 1848 to 1883 (DLRW…KTNP). 2 stretches are compositionally biased toward basic residues: residues 1422–1441 (SQIK…HQFS) and 1853–1863 (PSSRTKQKRKD).

Belongs to the ycf78 family.

The protein resides in the plastid. The protein localises to the chloroplast membrane. Essential for cell growth. May be involved in binding chloroplast DNA to either the chloroplast envelope or the thylakoid membrane. This is an uncharacterized protein from Chlamydomonas reinhardtii (Chlamydomonas smithii).